We begin with the raw amino-acid sequence, 397 residues long: Succinyl-diaminopimelate desuccinylase (397 aa).

Zn(2+) is bound at residue H73. D75 is an active-site residue. D106 is a binding site for Zn(2+). The active-site Proton acceptor is E140. 3 residues coordinate Zn(2+): E141, E169, and H366.

Belongs to the peptidase M20A family. DapE subfamily. As to quaternary structure, homodimer. Zn(2+) serves as cofactor. Co(2+) is required as a cofactor.

It carries out the reaction N-succinyl-(2S,6S)-2,6-diaminopimelate + H2O = (2S,6S)-2,6-diaminopimelate + succinate. It participates in amino-acid biosynthesis; L-lysine biosynthesis via DAP pathway; LL-2,6-diaminopimelate from (S)-tetrahydrodipicolinate (succinylase route): step 3/3. Catalyzes the hydrolysis of N-succinyl-L,L-diaminopimelic acid (SDAP), forming succinate and LL-2,6-diaminopimelate (DAP), an intermediate involved in the bacterial biosynthesis of lysine and meso-diaminopimelic acid, an essential component of bacterial cell walls. This Rhizobium leguminosarum bv. trifolii (strain WSM2304) protein is Succinyl-diaminopimelate desuccinylase.